Consider the following 102-residue polypeptide: Co-chaperonin GroES (102 aa).

The protein belongs to the GroES chaperonin family. Heptamer of 7 subunits arranged in a ring. Interacts with the chaperonin GroEL.

It localises to the cytoplasm. Together with the chaperonin GroEL, plays an essential role in assisting protein folding. The GroEL-GroES system forms a nano-cage that allows encapsulation of the non-native substrate proteins and provides a physical environment optimized to promote and accelerate protein folding. GroES binds to the apical surface of the GroEL ring, thereby capping the opening of the GroEL channel. The chain is Co-chaperonin GroES from Chlamydia trachomatis serovar L2 (strain ATCC VR-902B / DSM 19102 / 434/Bu).